Here is a 522-residue protein sequence, read N- to C-terminus: Transactivator/viroplasmin protein (522 aa).

Positions 488–522 (DASADEGTTDKSGPPPTRSIVEKEDVPNTSSKQVD) are disordered.

This sequence belongs to the caulimoviridae viroplasmin family.

The protein resides in the host cytoplasm. Enhances the ribosomal termination-reinitiation event leading to the translation of major open reading frames on the polycistronic viral RNAs. This chain is Transactivator/viroplasmin protein, found in Cauliflower mosaic virus (strain D/H) (CaMV).